Here is a 357-residue protein sequence, read N- to C-terminus: Probable butyrate kinase 1 (357 aa).

This sequence belongs to the acetokinase family.

The protein resides in the cytoplasm. The enzyme catalyses butanoate + ATP = butanoyl phosphate + ADP. In Caldanaerobacter subterraneus subsp. tengcongensis (strain DSM 15242 / JCM 11007 / NBRC 100824 / MB4) (Thermoanaerobacter tengcongensis), this protein is Probable butyrate kinase 1.